The sequence spans 152 residues: Superoxide dismutase [Cu-Zn] (152 aa).

Cu cation is bound by residues His45, His47, and His62. A disulfide bridge links Cys56 with Cys145. Zn(2+) is bound by residues His62, His70, His79, and Asp82. His119 serves as a coordination point for Cu cation.

The protein belongs to the Cu-Zn superoxide dismutase family. In terms of assembly, homodimer. Cu cation is required as a cofactor. It depends on Zn(2+) as a cofactor.

Its subcellular location is the cytoplasm. The enzyme catalyses 2 superoxide + 2 H(+) = H2O2 + O2. Functionally, destroys radicals which are normally produced within the cells and which are toxic to biological systems. This chain is Superoxide dismutase [Cu-Zn] (SODCC), found in Capsicum annuum (Capsicum pepper).